The following is a 478-amino-acid chain: ATP synthase subunit beta (478 aa).

Residue 158–165 coordinates ATP; sequence GGAGVGKT.

Belongs to the ATPase alpha/beta chains family. In terms of assembly, F-type ATPases have 2 components, CF(1) - the catalytic core - and CF(0) - the membrane proton channel. CF(1) has five subunits: alpha(3), beta(3), gamma(1), delta(1), epsilon(1). CF(0) has three main subunits: a(1), b(2) and c(9-12). The alpha and beta chains form an alternating ring which encloses part of the gamma chain. CF(1) is attached to CF(0) by a central stalk formed by the gamma and epsilon chains, while a peripheral stalk is formed by the delta and b chains.

It is found in the cell inner membrane. It carries out the reaction ATP + H2O + 4 H(+)(in) = ADP + phosphate + 5 H(+)(out). Produces ATP from ADP in the presence of a proton gradient across the membrane. The catalytic sites are hosted primarily by the beta subunits. The protein is ATP synthase subunit beta of Rhizobium johnstonii (strain DSM 114642 / LMG 32736 / 3841) (Rhizobium leguminosarum bv. viciae).